A 263-amino-acid polypeptide reads, in one-letter code: Small ribosomal subunit protein eS1 (263 aa).

Positions 236 to 254 (GDGKGGSDEPGARVDRPEG) are enriched in basic and acidic residues. Positions 236 to 263 (GDGKGGSDEPGARVDRPEGYEPPVQETV) are disordered.

Belongs to the eukaryotic ribosomal protein eS1 family. Component of the small ribosomal subunit. Mature ribosomes consist of a small (40S) and a large (60S) subunit. The 40S subunit contains about 33 different proteins and 1 molecule of RNA (18S). The 60S subunit contains about 49 different proteins and 3 molecules of RNA (28S, 5.8S and 5S).

It localises to the cytoplasm. The polypeptide is Small ribosomal subunit protein eS1 (Periplaneta americana (American cockroach)).